Reading from the N-terminus, the 243-residue chain is Anti-H(O) lectin 1 (243 aa).

N-linked (GlcNAc...) asparagine; partial glycosylation occurs at N10. The N-linked (GlcNAc...) asparagine glycan is linked to N116. The Mn(2+) site is built by E126 and D128. Positions 128, 135, and 138 each coordinate Ca(2+). Residues D138 and H143 each contribute to the Mn(2+) site.

This sequence belongs to the leguminous lectin family.

Functionally, L-fucose specific lectin. This chain is Anti-H(O) lectin 1, found in Ulex europaeus (Furze).